The chain runs to 201 residues: Large ribosomal subunit protein uL4 (201 aa).

Positions lysine 44–glycine 66 are disordered. Residues glycine 55–glycine 66 are compositionally biased toward basic residues.

It belongs to the universal ribosomal protein uL4 family. Part of the 50S ribosomal subunit.

In terms of biological role, one of the primary rRNA binding proteins, this protein initially binds near the 5'-end of the 23S rRNA. It is important during the early stages of 50S assembly. It makes multiple contacts with different domains of the 23S rRNA in the assembled 50S subunit and ribosome. Forms part of the polypeptide exit tunnel. The polypeptide is Large ribosomal subunit protein uL4 (Alteromonas mediterranea (strain DSM 17117 / CIP 110805 / LMG 28347 / Deep ecotype)).